The following is an 887-amino-acid chain: Transcriptional regulator DEF1 (887 aa).

Polar residues predominate over residues 1 to 13 (MERRQFNTSNIRN). 8 disordered regions span residues 1–117 (MERR…IQPG), 203–293 (KRSL…ESNA), 311–330 (NNETNNTGESNSTSQQPRQL), 350–542 (PVLG…QQAQ), 555–578 (NRPPSQQRQYSQTPQYNQPPPQQK), 614–675 (QAPQ…QVPK), 696–758 (QRTL…TQEQ), and 813–887 (NNAN…NLLN). Residues 57–75 (SSSQSNSVQNQDQSEDQSQ) show a composition bias toward low complexity. Residues 76–107 (LPQQESNTQQESNTQQESNTPSPRASNTSTET) show a composition bias toward polar residues. Residues 199–234 (EEMRKRSLENSRKRELEEAQEREESNKRQHTESSAE) adopt a coiled-coil conformation. Residues 203–231 (KRSLENSRKRELEEAQEREESNKRQHTES) show a composition bias toward basic and acidic residues. Residues 232-254 (SAEPNAESSTESTTESNAESGAE) show a composition bias toward low complexity. Polar residues predominate over residues 261-270 (AESTTESNVE). A compositionally biased stretch (low complexity) spans 311–326 (NNETNNTGESNSTSQQ). The segment covering 364–393 (KTSLTGSQNKVHSTNTQQSQKHPQQILTNS) has biased composition (polar residues). Composition is skewed to low complexity over residues 399–408 (QQYSAQSQQQ), 428–456 (QQQQKQPSVPTSSVPLQVSQKQNQQQQEL), 475–519 (QQQS…QVQT), and 526–542 (QPQTQLSQQQQQQQQAQ). A compositionally biased stretch (low complexity) spans 622–640 (YQHHYQQVQQRQNQQPYMQ). Over residues 641–658 (SAPTYQQPHVQTPKSTRS) the composition is skewed to polar residues. Residues 696–710 (QRTLDNGREPERLRT) show a composition bias toward basic and acidic residues. Positions 729–745 (RSKQSSNQKPVVKQQSS) are enriched in polar residues. Residues 829 to 844 (TNTRGGRASTRSSGRP) show a composition bias toward low complexity. Positions 865–887 (TDGSQSQNSGKASKISNIRNLLN) are enriched in polar residues.

The protein localises to the nucleus. Its function is as follows. Transcriptional regulator involved in extension of germ tubes into elongated hyphae and maintenance of filamentous growth. Regulates expression of UME6. Acts in a pathway that regulates maintenance of hyphal growth by repressing hyphal-to-yeast transition and allows dissemination within host epithelial tissues. Dispensable for invasion into both host oral epithelial cells and enterocytes, but required for epithelial damage. This is Transcriptional regulator DEF1 (DEF1) from Candida albicans (strain SC5314 / ATCC MYA-2876) (Yeast).